The chain runs to 856 residues: DNA mismatch repair protein MutS (856 aa).

618-625 provides a ligand contact to ATP; it reads GPNMGGKS.

Belongs to the DNA mismatch repair MutS family.

This protein is involved in the repair of mismatches in DNA. It is possible that it carries out the mismatch recognition step. This protein has a weak ATPase activity. This Shewanella baltica (strain OS185) protein is DNA mismatch repair protein MutS.